Reading from the N-terminus, the 203-residue chain is Outer-membrane lipoprotein carrier protein (203 aa).

Residues 1–21 (MKKLAITCALLSGMVVSQVWA) form the signal peptide.

Belongs to the LolA family. As to quaternary structure, monomer.

It is found in the periplasm. Participates in the translocation of lipoproteins from the inner membrane to the outer membrane. Only forms a complex with a lipoprotein if the residue after the N-terminal Cys is not an aspartate (The Asp acts as a targeting signal to indicate that the lipoprotein should stay in the inner membrane). This Klebsiella pneumoniae subsp. pneumoniae (strain ATCC 700721 / MGH 78578) protein is Outer-membrane lipoprotein carrier protein.